Here is a 132-residue protein sequence, read N- to C-terminus: Sec-independent protein translocase protein TatB (132 aa).

A helical membrane pass occupies residues F2–G22. Positions E68–R132 are disordered. The span at T102–E122 shows a compositional bias: low complexity.

It belongs to the TatB family. As to quaternary structure, the Tat system comprises two distinct complexes: a TatABC complex, containing multiple copies of TatA, TatB and TatC subunits, and a separate TatA complex, containing only TatA subunits. Substrates initially bind to the TatABC complex, which probably triggers association of the separate TatA complex to form the active translocon.

The protein resides in the cell inner membrane. Functionally, part of the twin-arginine translocation (Tat) system that transports large folded proteins containing a characteristic twin-arginine motif in their signal peptide across membranes. Together with TatC, TatB is part of a receptor directly interacting with Tat signal peptides. TatB may form an oligomeric binding site that transiently accommodates folded Tat precursor proteins before their translocation. The polypeptide is Sec-independent protein translocase protein TatB (Shewanella woodyi (strain ATCC 51908 / MS32)).